Consider the following 717-residue polypeptide: Polyribonucleotide nucleotidyltransferase (717 aa).

Mg(2+) contacts are provided by aspartate 486 and aspartate 492. Residues 553–612 (PKIVQLQIDIDKISLVIGSTGKTVKAITDEFEVRVQIEQDGRITLFGTDSLKMQKAKAKI) enclose the KH domain. Residues 622 to 715 (GEIYDGIVKK…KFGKIELELV (94 aa)) form the S1 motif domain. The segment at 659–689 (RYGDMRHSRYGSGRHSRYGRDNRNTFGMNPP) is disordered. Residues 666–675 (SRYGSGRHSR) show a composition bias toward basic residues.

This sequence belongs to the polyribonucleotide nucleotidyltransferase family. The cofactor is Mg(2+).

Its subcellular location is the cytoplasm. It carries out the reaction RNA(n+1) + phosphate = RNA(n) + a ribonucleoside 5'-diphosphate. Involved in mRNA degradation. Catalyzes the phosphorolysis of single-stranded polyribonucleotides processively in the 3'- to 5'-direction. This is Polyribonucleotide nucleotidyltransferase from Borrelia hermsii (strain HS1 / DAH).